Here is a 237-residue protein sequence, read N- to C-terminus: Oil body-associated protein 2C (237 aa).

It belongs to the OBAP family.

In Arabidopsis thaliana (Mouse-ear cress), this protein is Oil body-associated protein 2C.